We begin with the raw amino-acid sequence, 118 residues long: V-type proton ATPase subunit G 2 (118 aa).

The segment at 23–91 (ADARKRKARR…QGMQSSQQRN (69 aa)) is disordered. Residues 35–55 (QAKEEAQMEVEQYRREREQEF) show a composition bias toward basic and acidic residues. 2 stretches are compositionally biased toward polar residues: residues 56-69 (QSKQ…QGNL) and 78-89 (RRQVQGMQSSQQ).

It belongs to the V-ATPase G subunit family. In terms of assembly, V-ATPase is a heteromultimeric enzyme made up of two complexes: the ATP-hydrolytic V1 complex and the proton translocation V0 complex. The V1 complex consists of three catalytic AB heterodimers that form a heterohexamer, three peripheral stalks each consisting of EG heterodimers, one central rotor including subunits D and F, and the regulatory subunits C and H. The proton translocation complex V0 consists of the proton transport subunit a, a ring of proteolipid subunits c9c'', rotary subunit d, subunits e and f, and the accessory subunits ATP6AP1/Ac45 and ATP6AP2/PRR.

The protein resides in the melanosome. It is found in the cytoplasmic vesicle. The protein localises to the clathrin-coated vesicle membrane. In terms of biological role, subunit of the V1 complex of vacuolar(H+)-ATPase (V-ATPase), a multisubunit enzyme composed of a peripheral complex (V1) that hydrolyzes ATP and a membrane integral complex (V0) that translocates protons. V-ATPase is responsible for acidifying and maintaining the pH of intracellular compartments and in some cell types, is targeted to the plasma membrane, where it is responsible for acidifying the extracellular environment. The sequence is that of V-type proton ATPase subunit G 2 (Atp6v1g2) from Mus musculus (Mouse).